A 329-amino-acid chain; its full sequence is Calponin-3 (329 aa).

Lys23 is subject to N6-acetyllysine. One can recognise a Calponin-homology (CH) domain in the interval 26–130 (HQAEEDLRNW…TLVALAGLAK (105 aa)). N6-methyllysine is present on Lys158. Calponin-like repeat units lie at residues 164 to 189 (IGLQ…RHLY), 204 to 229 (ISLQ…RDIY), and 243 to 268 (ISLQ…RQVY). The segment at 279–329 (PVIHNGSQGTGTNGSEISDSDYQAEYPDEYHGEYQDDYPRDYQYSDQGIDY) is disordered. Residues 306–318 (DEYHGEYQDDYPR) show a composition bias toward basic and acidic residues. Ser323 bears the Phosphoserine mark.

It belongs to the calponin family. In terms of tissue distribution, expressed in both non-smooth muscle tissues as well as smooth muscle tissues.

Thin filament-associated protein that is implicated in the regulation and modulation of smooth muscle contraction. It is capable of binding to actin, calmodulin and tropomyosin. The interaction of calponin with actin inhibits the actomyosin Mg-ATPase activity. This Homo sapiens (Human) protein is Calponin-3 (CNN3).